An 850-amino-acid chain; its full sequence is MSDLPPPDLGSEEISVSPTSSSSSFVPIDKNQLQDAVQVVSEAKEFNSLILDYVRKATPASEVNNNYHIVSVFGSQSTGKSTLLNRLFNTNFDVMDESNRSQTTKGIWMAYSSIITTSQGPVPSKGGENIFVMDVEGTDGRERGEDQDFERKAALFALSTSEVLIINVWEHQIGLYQGANMGLLKTVFEVNLSLFGRTKLEMNEHKVLLLFVIRDHIGTTSKESLAATVTQDLIKMWDSLSKPQELAHLQFSDFFDIQFHTLRHKILQPGEFTTDVQLLGDRFTDHKNEDFLFKKYYHHDIPIDGWTMYAENCWDQIDKNKDLDLPTQQILVAKFKCDEILTSVFEEFRSKFEERHAKYAPTDIKEEVDYEELGGSLGDLKEDTLENYDMMASRYNQSVYLQKRKTLEQKITDVYQDLVDQHGAHMVSKLSAKFASSLSSKKLPKDVSFALATEALRKDIVHQFLKNCSCITLNGSLDHAKHVTSFTRKLDSILSKQRFVELNSILAKSLKKVESAVAKAITQEISEPSESTWDRVLEKFKGAQDEYFYSKYETATGVDFGLGTSASVNERALEKFQFRAWSLLHLQMRKLISKDNLVIILKDRFEDKFRYDENGIPRLYQNSHELELNFTAAKEHALKALPILTLATLSDGTTIVPKYDVRDKRLQKKLGAAFDTTGEVDLKDEDVESDTDEEDEDENEPKCFAEAISETDKASVLSKFKKETDATFVESKRALIQHVTHIPYYIYIVILVLGWNEFMAVLRNPFFFTLLLMLGAGTYVLYHLNLLKPAMVVVQRMFDECLVIAKQKLKEFIDEQPQEHAKRLSKMAGITEDKPEEIEMSDLTPPGEGS.

Residues M1–P27 are disordered. Residues M1 to H741 are Cytoplasmic-facing. The segment covering E12–P27 has biased composition (low complexity). The region spanning N64–Y297 is the GB1/RHD3-type G domain. Position 74–81 (G74–S81) interacts with GTP. The helical transmembrane segment at I742 to L762 threads the bilayer. Over R763–P765 the chain is Lumenal. A helical membrane pass occupies residues F766–L786. At L787–S850 the chain is on the cytoplasmic side. Positions Q816 to S850 are disordered.

It belongs to the TRAFAC class dynamin-like GTPase superfamily. GB1/RHD3 GTPase family. RHD3 subfamily.

It is found in the endoplasmic reticulum membrane. Functionally, cooperates with the reticulon proteins and tubule-shaping DP1 family proteins to generate and maintain the structure of the tubular endoplasmic reticulum network. Has GTPase activity, which is required for its function in ER organization. The chain is Protein SEY1 from Meyerozyma guilliermondii (strain ATCC 6260 / CBS 566 / DSM 6381 / JCM 1539 / NBRC 10279 / NRRL Y-324) (Yeast).